The sequence spans 1863 residues: Breast cancer type 1 susceptibility protein (1863 aa).

M1 carries the N-acetylmethionine modification. The RING-type zinc-finger motif lies at 24–65 (CPICLELIKEPVSTKCDHIFCKFCMLKLLNQKKGPSQCPLCK). Residue K109 forms a Glycyl lysine isopeptide (Lys-Gly) (interchain with G-Cter in SUMO2) linkage. S114 bears the Phosphoserine mark. Residues 230–270 (ETDVTNTEHHQPSNNDLNTTEKRAAERHPEKYQGSSVSNLH) form a disordered region. Positions 248-260 (TTEKRAAERHPEK) are enriched in basic and acidic residues. A Glycyl lysine isopeptide (Lys-Gly) (interchain with G-Cter in SUMO2) cross-link involves residue K301. The interval 306–338 (NKSKQPGLARSQHNRWAGSKETCNDRRTPSTEK) is disordered. The span at 327–338 (TCNDRRTPSTEK) shows a compositional bias: basic and acidic residues. Residue K339 forms a Glycyl lysine isopeptide (Lys-Gly) (interchain with G-Cter in SUMO2) linkage. Residues S395, S398, S423, and S434 each carry the phosphoserine modification. Residues K443, K459, and K519 each participate in a glycyl lysine isopeptide (Lys-Gly) (interchain with G-Cter in SUMO2) cross-link. Over residues 534–544 (QGTNQTEQNGQ) the composition is skewed to low complexity. The disordered stretch occupies residues 534–570 (QGTNQTEQNGQVMNITNSGHENKTKGDSIQNEKNPNP). The residue at position 551 (S551) is a Phosphoserine. Glycyl lysine isopeptide (Lys-Gly) (interchain with G-Cter in SUMO2) cross-links involve residues K583 and K654. Residues 654–709 (KYNQMPVRHSRNLQLMEGKEPATGAKKSNKPNEQTSKRHDSDTFPELKLTNAPGSF) are disordered. Phosphoserine is present on residues S694, S708, and S725. Residues K734 and K739 each participate in a glycyl lysine isopeptide (Lys-Gly) (interchain with G-Cter in SUMO2) cross-link. A phosphoserine mark is found at S753 and S840. Glycyl lysine isopeptide (Lys-Gly) (interchain with G-Cter in SUMO2) cross-links involve residues K918 and K987. S988 carries the phosphoserine; by CHEK2 modification. S1009 carries the post-translational modification Phosphoserine. K1079 participates in a covalent cross-link: Glycyl lysine isopeptide (Lys-Gly) (interchain with G-Cter in SUMO2). A Phosphoserine; by ATR; in vitro modification is found at S1143. Residues 1181-1216 (VQKGELSRSPSPFTHTHLAQGYRRGAKKLESSEENL) form a disordered region. 5 positions are modified to phosphoserine: S1189, S1191, S1211, S1217, and S1218. The residue at position 1280 (S1280) is a Phosphoserine; by ATR; in vitro. The tract at residues 1322-1387 (KQMRHQSESQ…VSEDCSGLSS (66 aa)) is disordered. 3 positions are modified to phosphoserine: S1328, S1336, and S1342. Positions 1373–1387 (ESETSVSEDCSGLSS) are enriched in polar residues. A Phosphoserine; by ATM and ATR modification is found at S1387. At T1394 the chain carries Phosphothreonine; by ATR; in vitro. Residues 1397 to 1424 (RDTMQHNLIKLQQEMAELEAVLEQHGSQ) are interaction with PALB2. Position 1423 is a phosphoserine; by ATM and ATR (S1423). Residues 1440-1505 (EDLRNPEQST…SSPSKCPSLD (66 aa)) form a disordered region. Residues 1445–1470 (PEQSTSEKAVLTSQKSSEYPISQNPE) show a composition bias toward polar residues. S1457 carries the phosphoserine; by ATR; in vitro modification. A Phosphoserine; by ATM modification is found at S1524. S1542 bears the Phosphoserine mark. The disordered stretch occupies residues 1565 to 1596 (ESGISLFSDDPESDPSEDRAPESARVGNIPSS). 2 BRCT domains span residues 1642–1736 (STER…DFEV) and 1756–1855 (QDRK…TYLI).

In terms of assembly, heterodimer with BARD1. Part of the BRCA1-associated genome surveillance complex (BASC), which contains BRCA1, MSH2, MSH6, MLH1, ATM, BLM, PMS2 and the MRE11-RAD50-NBN protein (MRN) complex. This association could be a dynamic process changing throughout the cell cycle and within subnuclear domains. Component of the BRCA1-A complex, at least composed of BRCA1, BARD1, UIMC1/RAP80, ABRAXAS1, BRCC3/BRCC36, BABAM2 and BABAM1/NBA1. Interacts (via the BRCT domains) with ABRAXAS1 (phosphorylated form); this is important for recruitment to sites of DNA damage. Can form a heterotetramer with two molecules of ABRAXAS1 (phosphorylated form). Component of the BRCA1-RBBP8 complex. Interacts (via the BRCT domains) with RBBP8 ('Ser-327' phosphorylated form); the interaction ubiquitinates RBBP8, regulates CHEK1 activation, and involves RBBP8 in BRCA1-dependent G2/M checkpoint control on DNA damage. Associates with RNA polymerase II holoenzyme. Interacts with SMC1A, NELFB, DCLRE1C, CLSPN. Interacts with CHEK1, CHEK2, BAP1, BRCC3, UBXN1 and PCLAF. Interacts (via BRCT domains) with BRIP1 (phosphorylated form). Interacts with FANCD2 (ubiquitinated form). Interacts with H2AX (phosphorylated on 'Ser-140'). Interacts (via the BRCT domains) with ACACA (phosphorylated form); the interaction prevents dephosphorylation of ACACA. Part of a BRCA complex containing BRCA1, BRCA2 and PALB2. Interacts directly with PALB2; the interaction is essential for its function in HRR. Interacts directly with BRCA2; the interaction occurs only in the presence of PALB2 which serves as the bridging protein. Interacts (via the BRCT domains) with LMO4; the interaction represses the transcriptional activity of BRCA1. Interacts (via the BRCT domains) with CCAR2 (via N-terminus); the interaction represses the transcriptional activator activity of BRCA1. Interacts with EXD2. Interacts (via C-terminus) with DHX9; this interaction is direct and links BRCA1 to the RNA polymerase II holoenzyme. Interacts with DNA helicase ZGRF1; the interaction is increased following DNA damage induction. Phosphorylated in response to IR, UV, and various stimuli that cause checkpoint activation, probably by ATM or ATR. Phosphorylation at Ser-988 by CHEK2 regulates mitotic spindle assembly. Phosphorylation by AURKA regulates centrosomal microtubule nucleation. Post-translationally, autoubiquitinated, undergoes 'Lys-6'-linked polyubiquitination. 'Lys-6'-linked polyubiquitination does not promote degradation. As to expression, isoform 1 and isoform 3 are widely expressed. Isoform 3 is reduced or absent in several breast and ovarian cancer cell lines.

Its subcellular location is the nucleus. It is found in the chromosome. It localises to the cytoplasm. It carries out the reaction S-ubiquitinyl-[E2 ubiquitin-conjugating enzyme]-L-cysteine + [acceptor protein]-L-lysine = [E2 ubiquitin-conjugating enzyme]-L-cysteine + N(6)-ubiquitinyl-[acceptor protein]-L-lysine.. It participates in protein modification; protein ubiquitination. The E3 ubiquitin-protein ligase activity is inhibited by phosphorylation by AURKA. Activity is increased by phosphatase treatment. Functionally, E3 ubiquitin-protein ligase that specifically mediates the formation of 'Lys-6'-linked polyubiquitin chains and plays a central role in DNA repair by facilitating cellular responses to DNA damage. It is unclear whether it also mediates the formation of other types of polyubiquitin chains. The BRCA1-BARD1 heterodimer coordinates a diverse range of cellular pathways such as DNA damage repair, ubiquitination and transcriptional regulation to maintain genomic stability. Regulates centrosomal microtubule nucleation. Required for appropriate cell cycle arrests after ionizing irradiation in both the S-phase and the G2 phase of the cell cycle. Required for FANCD2 targeting to sites of DNA damage. Inhibits lipid synthesis by binding to inactive phosphorylated ACACA and preventing its dephosphorylation. Contributes to homologous recombination repair (HRR) via its direct interaction with PALB2, fine-tunes recombinational repair partly through its modulatory role in the PALB2-dependent loading of BRCA2-RAD51 repair machinery at DNA breaks. Component of the BRCA1-RBBP8 complex which regulates CHEK1 activation and controls cell cycle G2/M checkpoints on DNA damage via BRCA1-mediated ubiquitination of RBBP8. Acts as a transcriptional activator. The polypeptide is Breast cancer type 1 susceptibility protein (BRCA1) (Homo sapiens (Human)).